Reading from the N-terminus, the 420-residue chain is MREFVNLKFEEMPKVWYNVLSDLPFKLDPPLDPETNKPMSPEKLLKIFPAPLLEQEVNDTDKFIDIPEEILKEYAVYRPTPLIRANFLEEYLQTPAKIYYKYEGQSPTGSHKTNTALAQAYYNKISGVKKLYTETGAGQWGSALSYSGLKFGINVNIYMVRVSFNQKPARKSIMKLFNGKVTPSPSRNTKSGRKYEENHPGSLGIAISEAMEEVLQRNDSKYALGSVLNHVLLHQTIIGLEIKKQLEKLNIQPDVIIGCHGGGSNFGGTILPFIPDKLSGKNIRFIACEPESCPTLTKGEYRYDFGDTAGFTPLLKMYTLGKDFIPPSIHAGGLRYHGAAPIISALLNHNLIEAKAFSQEETFKAARLFSKLEGIIPAPESSHAIAGAIKEALNAKKENKEKIIVFTLSGHGLFDLNAYI.

K112 is subject to N6-(pyridoxal phosphate)lysine.

Belongs to the TrpB family. As to quaternary structure, tetramer of two alpha and two beta chains. The cofactor is pyridoxal 5'-phosphate.

It catalyses the reaction (1S,2R)-1-C-(indol-3-yl)glycerol 3-phosphate + L-serine = D-glyceraldehyde 3-phosphate + L-tryptophan + H2O. The protein operates within amino-acid biosynthesis; L-tryptophan biosynthesis; L-tryptophan from chorismate: step 5/5. The beta subunit is responsible for the synthesis of L-tryptophan from indole and L-serine. This chain is Tryptophan synthase beta chain, found in Thermosipho africanus (strain TCF52B).